Reading from the N-terminus, the 198-residue chain is Synaptobrevin homolog YKT6-A (198 aa).

Positions 8–127 (VLYKGENKVH…IQYNALDSYL (120 aa)) constitute a Longin domain. One can recognise a v-SNARE coiled-coil homology domain in the interval 138–198 (PMSKVQAELD…RKQNSCCDIM (61 aa)). The S-palmitoyl cysteine moiety is linked to residue cysteine 194. Cysteine 195 carries the cysteine methyl ester modification. A lipid anchor (S-farnesyl cysteine) is attached at cysteine 195. A propeptide spans 196–198 (DIM) (removed in mature form).

Belongs to the synaptobrevin family. Post-translationally, palmitoylated; catalyzes its own palmitoylation. Palmitoylation is required for Golgi targeting. Farnesylation is required for Golgi targeting.

It localises to the cytoplasm. It is found in the cytosol. The protein resides in the cytoplasmic vesicle membrane. Its subcellular location is the golgi apparatus membrane. Vesicular soluble NSF attachment protein receptor (v-SNARE) mediating vesicle docking and fusion to a specific acceptor cellular compartment. Functions in endoplasmic reticulum to Golgi transport; as part of a SNARE complex composed of GOSR1, GOSR2 and STX5. Functions in early/recycling endosome to TGN transport; as part of a SNARE complex composed of BET1L, GOSR1 and STX5. Has a S-palmitoyl transferase activity. This is Synaptobrevin homolog YKT6-A (ykt6-a) from Xenopus laevis (African clawed frog).